The sequence spans 358 residues: Holliday junction branch migration complex subunit RuvB (358 aa).

Positions 1 to 24 (MAIKRSHNSPPATEENLLTPNPTI) are disordered. The span at 8–22 (NSPPATEENLLTPNP) shows a compositional bias: polar residues. The segment at 13–195 (TEENLLTPNP…FGLIQRLRFY (183 aa)) is large ATPase domain (RuvB-L). ATP contacts are provided by residues I34, R35, G76, K79, T80, T81, 142-144 (EDY), R185, Y195, and R232. T80 contributes to the Mg(2+) binding site. The tract at residues 196 to 266 (AVEELTAIIL…LAAEGLNQLN (71 aa)) is small ATPAse domain (RuvB-S). The tract at residues 269–358 (SMGLDWTDRL…KDRSLPLFEF (90 aa)) is head domain (RuvB-H). Residues R324 and R329 each contribute to the DNA site.

The protein belongs to the RuvB family. As to quaternary structure, homohexamer. Forms an RuvA(8)-RuvB(12)-Holliday junction (HJ) complex. HJ DNA is sandwiched between 2 RuvA tetramers; dsDNA enters through RuvA and exits via RuvB. An RuvB hexamer assembles on each DNA strand where it exits the tetramer. Each RuvB hexamer is contacted by two RuvA subunits (via domain III) on 2 adjacent RuvB subunits; this complex drives branch migration. In the full resolvosome a probable DNA-RuvA(4)-RuvB(12)-RuvC(2) complex forms which resolves the HJ.

It localises to the cytoplasm. It carries out the reaction ATP + H2O = ADP + phosphate + H(+). Functionally, the RuvA-RuvB-RuvC complex processes Holliday junction (HJ) DNA during genetic recombination and DNA repair, while the RuvA-RuvB complex plays an important role in the rescue of blocked DNA replication forks via replication fork reversal (RFR). RuvA specifically binds to HJ cruciform DNA, conferring on it an open structure. The RuvB hexamer acts as an ATP-dependent pump, pulling dsDNA into and through the RuvAB complex. RuvB forms 2 homohexamers on either side of HJ DNA bound by 1 or 2 RuvA tetramers; 4 subunits per hexamer contact DNA at a time. Coordinated motions by a converter formed by DNA-disengaged RuvB subunits stimulates ATP hydrolysis and nucleotide exchange. Immobilization of the converter enables RuvB to convert the ATP-contained energy into a lever motion, pulling 2 nucleotides of DNA out of the RuvA tetramer per ATP hydrolyzed, thus driving DNA branch migration. The RuvB motors rotate together with the DNA substrate, which together with the progressing nucleotide cycle form the mechanistic basis for DNA recombination by continuous HJ branch migration. Branch migration allows RuvC to scan DNA until it finds its consensus sequence, where it cleaves and resolves cruciform DNA. This chain is Holliday junction branch migration complex subunit RuvB, found in Microcystis aeruginosa (strain NIES-843 / IAM M-2473).